The chain runs to 261 residues: ATP synthase subunit a (261 aa).

A propeptide spans 1–14 (MSTLSFNNISTEVL) (removed in mature form). The next 7 membrane-spanning stretches (helical) occupy residues 38 to 58 (ITNIGFYLTIGAFFFLVINLL), 96 to 116 (IYFPFIYTLFIFILINNLIGM), 126 to 146 (HFVVTFALSFTIVLGATILGF), 153 to 173 (FFSLLVPAGCPLALLPLLVLI), 191 to 211 (ANILSGHMLLHILAGFTYNIM), 214 to 234 (GIIFFFLGLIPLAFIIAFSGL), and 235 to 255 (ELGIAFIQAQVFVVLTSGYIK).

This sequence belongs to the ATPase A chain family. F-type ATPases have 2 components, CF(1) - the catalytic core - and CF(0) - the membrane proton channel. CF(1) has five subunits: alpha(3), beta(3), gamma(1), delta(1), epsilon(1). CF(0) has three main subunits: a, b and c.

The protein localises to the mitochondrion inner membrane. Mitochondrial membrane ATP synthase (F(1)F(0) ATP synthase or Complex V) produces ATP from ADP in the presence of a proton gradient across the membrane which is generated by electron transport complexes of the respiratory chain. F-type ATPases consist of two structural domains, F(1) - containing the extramembraneous catalytic core and F(0) - containing the membrane proton channel, linked together by a central stalk and a peripheral stalk. During catalysis, ATP synthesis in the catalytic domain of F(1) is coupled via a rotary mechanism of the central stalk subunits to proton translocation. Key component of the proton channel; it may play a direct role in the translocation of protons across the membrane. In Neurospora crassa (strain ATCC 24698 / 74-OR23-1A / CBS 708.71 / DSM 1257 / FGSC 987), this protein is ATP synthase subunit a (atp-6).